The following is an 826-amino-acid chain: Outer membrane usher protein YehB (826 aa).

The signal sequence occupies residues 1-22 (MLRMTPLASAIVALLLGIEAYA). Cys-809 and Cys-825 form a disulfide bridge.

Belongs to the fimbrial export usher family.

The protein resides in the cell outer membrane. Its function is as follows. Part of the yehABCD fimbrial operon. Could contribute to adhesion to various surfaces in specific environmental niches. Probably involved in the export and assembly of fimbrial subunits across the outer membrane. This is Outer membrane usher protein YehB (yehB) from Escherichia coli (strain K12).